Reading from the N-terminus, the 432-residue chain is Glutamyl-tRNA reductase (432 aa).

Residues 55–58, Ser-114, 119–121, and Gln-125 contribute to the substrate site; these read TCNR and ETQ. Catalysis depends on Cys-56, which acts as the Nucleophile. 194–199 provides a ligand contact to NADP(+); that stretch reads GAGEMI.

This sequence belongs to the glutamyl-tRNA reductase family. In terms of assembly, homodimer.

The enzyme catalyses (S)-4-amino-5-oxopentanoate + tRNA(Glu) + NADP(+) = L-glutamyl-tRNA(Glu) + NADPH + H(+). Its pathway is porphyrin-containing compound metabolism; protoporphyrin-IX biosynthesis; 5-aminolevulinate from L-glutamyl-tRNA(Glu): step 1/2. Functionally, catalyzes the NADPH-dependent reduction of glutamyl-tRNA(Glu) to glutamate 1-semialdehyde (GSA). The protein is Glutamyl-tRNA reductase of Burkholderia orbicola (strain MC0-3).